We begin with the raw amino-acid sequence, 234 residues long: tRNA (guanine-N(1)-)-methyltransferase (234 aa).

S-adenosyl-L-methionine is bound by residues Gly115 and 135-140; that span reads VGDYIL.

It belongs to the RNA methyltransferase TrmD family. Homodimer.

It is found in the cytoplasm. The catalysed reaction is guanosine(37) in tRNA + S-adenosyl-L-methionine = N(1)-methylguanosine(37) in tRNA + S-adenosyl-L-homocysteine + H(+). Specifically methylates guanosine-37 in various tRNAs. This Rickettsia akari (strain Hartford) protein is tRNA (guanine-N(1)-)-methyltransferase.